The primary structure comprises 535 residues: Probable deoxycholate-binding periplasmic protein YgiS (535 aa).

A signal peptide spans 1–20; sequence MYTRNLLWLVSLVSAAPLYA.

The protein belongs to the bacterial solute-binding protein 5 family.

Its subcellular location is the periplasm. Its function is as follows. Probably part of a deoxycholate transport system. Its expression in the presence of deoxycholate in a ygiS deletion mutant increases intracellular deoxycholate levels and decreases cell growth; higher expression in the presence of deoxycholate inhibits cell growth completely. Bile acid detergents such as deoxycholate are important for host defense against bacterial growth in the gall bladder and duodenum. The protein is Probable deoxycholate-binding periplasmic protein YgiS (ygiS) of Escherichia coli (strain K12).